A 507-amino-acid chain; its full sequence is GMP synthase [glutamine-hydrolyzing] 1 (507 aa).

Positions 4–193 constitute a Glutamine amidotransferase type-1 domain; the sequence is KIIILDFGSQ…VVDVCGCKQD (190 aa). The active-site Nucleophile is the Cys-79. Active-site residues include His-167 and Glu-169. A GMPS ATP-PPase domain is found at 194–382; sequence WSPASFIEST…LGMPEHLITR (189 aa). 221–227 provides a ligand contact to ATP; it reads SGGVDSS.

In terms of assembly, homodimer.

The enzyme catalyses XMP + L-glutamine + ATP + H2O = GMP + L-glutamate + AMP + diphosphate + 2 H(+). Its pathway is purine metabolism; GMP biosynthesis; GMP from XMP (L-Gln route): step 1/1. Its function is as follows. Catalyzes the synthesis of GMP from XMP. The sequence is that of GMP synthase [glutamine-hydrolyzing] 1 (guaA1) from Bacteroides thetaiotaomicron (strain ATCC 29148 / DSM 2079 / JCM 5827 / CCUG 10774 / NCTC 10582 / VPI-5482 / E50).